A 210-amino-acid polypeptide reads, in one-letter code: Orotate phosphoribosyltransferase (210 aa).

Residues arginine 96, lysine 100, histidine 102, and 122 to 130 (DDLISTGGS) each bind 5-phospho-alpha-D-ribose 1-diphosphate. Serine 126 contributes to the orotate binding site.

The protein belongs to the purine/pyrimidine phosphoribosyltransferase family. PyrE subfamily. Homodimer. It depends on Mg(2+) as a cofactor.

It carries out the reaction orotidine 5'-phosphate + diphosphate = orotate + 5-phospho-alpha-D-ribose 1-diphosphate. It functions in the pathway pyrimidine metabolism; UMP biosynthesis via de novo pathway; UMP from orotate: step 1/2. Catalyzes the transfer of a ribosyl phosphate group from 5-phosphoribose 1-diphosphate to orotate, leading to the formation of orotidine monophosphate (OMP). The sequence is that of Orotate phosphoribosyltransferase from Levilactobacillus brevis (strain ATCC 367 / BCRC 12310 / CIP 105137 / JCM 1170 / LMG 11437 / NCIMB 947 / NCTC 947) (Lactobacillus brevis).